Reading from the N-terminus, the 390-residue chain is Cathepsin D (390 aa).

A propeptide spans 1 to 44 (activation peptide); that stretch reads VIRIPLHKFTSIRRTMSEAAGXVXXLIAKGPISKYATGEPAVRQ. A Peptidase A1 domain is found at 59-385; the sequence is YYGEIGIGTP…DRDQNRVGLA (327 aa). 2 cysteine pairs are disulfide-bonded: Cys71-Cys140 and Cys90-Cys97. Residue Asp77 is part of the active site. N-linked (GlcNAc...) asparagine glycans are attached at residues Asn114 and Asn241. Residues Cys264 and Cys268 are joined by a disulfide bond. Asp273 is an active-site residue. A disulfide bridge links Cys307 with Cys344.

It belongs to the peptidase A1 family. As to quaternary structure, consists of a light chain and a heavy chain. Interacts with ADAM30; this leads to activation of CTSD. Interacts with GRN; stabilizes CTSD; increases its proteolytic activity. In terms of processing, N- and O-glycosylated. Post-translationally, undergoes proteolytic cleavage and activation by ADAM30.

The protein resides in the lysosome. Its subcellular location is the melanosome. It localises to the secreted. The protein localises to the extracellular space. The catalysed reaction is Specificity similar to, but narrower than, that of pepsin A. Does not cleave the 4-Gln-|-His-5 bond in B chain of insulin.. In terms of biological role, acid protease active in intracellular protein breakdown. Plays a role in APP processing following cleavage and activation by ADAM30 which leads to APP degradation. This Bos taurus (Bovine) protein is Cathepsin D (CTSD).